The following is a 155-amino-acid chain: Ribonuclease H (155 aa).

Residues 1 to 146 (MPELFAYTDG…ADELARAGMK (146 aa)) enclose the RNase H type-1 domain. Mg(2+) contacts are provided by Asp9, Glu52, Asp74, and Asp138.

This sequence belongs to the RNase H family. As to quaternary structure, monomer. The cofactor is Mg(2+).

It localises to the cytoplasm. The catalysed reaction is Endonucleolytic cleavage to 5'-phosphomonoester.. Its function is as follows. Endonuclease that specifically degrades the RNA of RNA-DNA hybrids. The protein is Ribonuclease H of Ruegeria pomeroyi (strain ATCC 700808 / DSM 15171 / DSS-3) (Silicibacter pomeroyi).